Reading from the N-terminus, the 376-residue chain is Copper-containing nitrite reductase (376 aa).

The segment at residues 1–33 (MAEQMQISRRTILAGAALAGALAPVLATTSAWG) is a signal peptide (tat-type signal). Gln34 is subject to Pyrrolidone carboxylic acid. 2 consecutive Plastocyanin-like domains span residues 34-211 (QGAV…YDKI) and 212-376 (YYVG…PSGT). Residues His131, His136, His171, Cys172, His181, Met186, and His342 each contribute to the Cu cation site.

The protein belongs to the multicopper oxidase family. Homotrimer. Cu(2+) is required as a cofactor. Cu(+) serves as cofactor. Requires FAD as cofactor. In terms of processing, predicted to be exported by the Tat system. The position of the signal peptide cleavage has been experimentally proven.

It localises to the periplasm. It carries out the reaction nitric oxide + Fe(III)-[cytochrome c] + H2O = Fe(II)-[cytochrome c] + nitrite + 2 H(+). Its pathway is nitrogen metabolism; nitrate reduction (denitrification); dinitrogen from nitrate: step 2/4. The protein is Copper-containing nitrite reductase (nirK) of Alcaligenes faecalis.